We begin with the raw amino-acid sequence, 678 residues long: DNA ligase (678 aa).

NAD(+) is bound by residues 34–38 (DSEYD), 83–84 (SL), and Glu-114. Residue Lys-116 is the N6-AMP-lysine intermediate of the active site. Residues Arg-137, Glu-176, Lys-293, and Lys-317 each contribute to the NAD(+) site. The Zn(2+) site is built by Cys-411, Cys-414, Cys-429, and Cys-435. The 85-residue stretch at 594–678 (PTRQPLNGES…LMAGYGQTLS (85 aa)) folds into the BRCT domain.

It belongs to the NAD-dependent DNA ligase family. LigA subfamily. The cofactor is Mg(2+). Mn(2+) is required as a cofactor.

It carries out the reaction NAD(+) + (deoxyribonucleotide)n-3'-hydroxyl + 5'-phospho-(deoxyribonucleotide)m = (deoxyribonucleotide)n+m + AMP + beta-nicotinamide D-nucleotide.. Its function is as follows. DNA ligase that catalyzes the formation of phosphodiester linkages between 5'-phosphoryl and 3'-hydroxyl groups in double-stranded DNA using NAD as a coenzyme and as the energy source for the reaction. It is essential for DNA replication and repair of damaged DNA. The protein is DNA ligase of Acinetobacter baumannii (strain AB307-0294).